Reading from the N-terminus, the 267-residue chain is MVKIAVCGAAGRMGGRIIAAISETEGAVVSGALERLGHPMVGQDAGFNAGLGAIGVTISDDLTAVVQGCDVLIDFTTPKVSLKNLEVCGLNKKSIVIGSTGFTPEERALAAELAKDIPVVLAPNMSVGVNVCFKVLADVAKILGDDFDVEIVEAHHKMKKDSPSGTAVRMGEVVAEALGRDYNKVANFHREGICGERTKDEIGMQTIRGGDIVGEHTVYFIGMGERIEITHRAHTRDMFSRGSVRAAKWVVSQKPGLYDMQDVLGLR.

Residues 8–13 (GAAGRM) and Glu-34 each bind NAD(+). Residue Arg-35 coordinates NADP(+). Residues 98–100 (GST) and 122–125 (APNM) contribute to the NAD(+) site. The active-site Proton donor/acceptor is His-155. His-156 is a (S)-2,3,4,5-tetrahydrodipicolinate binding site. Catalysis depends on Lys-159, which acts as the Proton donor. Residue 165-166 (GT) participates in (S)-2,3,4,5-tetrahydrodipicolinate binding.

The protein belongs to the DapB family.

The protein localises to the cytoplasm. The enzyme catalyses (S)-2,3,4,5-tetrahydrodipicolinate + NAD(+) + H2O = (2S,4S)-4-hydroxy-2,3,4,5-tetrahydrodipicolinate + NADH + H(+). It carries out the reaction (S)-2,3,4,5-tetrahydrodipicolinate + NADP(+) + H2O = (2S,4S)-4-hydroxy-2,3,4,5-tetrahydrodipicolinate + NADPH + H(+). It functions in the pathway amino-acid biosynthesis; L-lysine biosynthesis via DAP pathway; (S)-tetrahydrodipicolinate from L-aspartate: step 4/4. Catalyzes the conversion of 4-hydroxy-tetrahydrodipicolinate (HTPA) to tetrahydrodipicolinate. This is 4-hydroxy-tetrahydrodipicolinate reductase from Geotalea uraniireducens (strain Rf4) (Geobacter uraniireducens).